A 308-amino-acid polypeptide reads, in one-letter code: Dipeptide transport system permease protein DppB (308 aa).

A run of 7 helical transmembrane segments spans residues 10–30, 59–79, 100–120, 131–151, 168–188, 228–248, and 278–298; these read WAMA…MKVI, LIFQ…GPSI, LGMT…VIAA, AMSL…TLLI, SPIH…AIIA, MPVI…SFVI, and VFYS…YGLL. The region spanning 94–295 is the ABC transmembrane type-1 domain; that stretch reads FPVSFELGMT…IMLFLVDLAY (202 aa).

The protein belongs to the binding-protein-dependent transport system permease family. OppBC subfamily.

The protein localises to the cell membrane. Its function is as follows. Probably part of the ABC transporter DppBCDE involved in dipeptide transport. Responsible for the translocation of the substrate across the membrane. This is Dipeptide transport system permease protein DppB (dppB) from Bacillus subtilis (strain 168).